We begin with the raw amino-acid sequence, 152 residues long: Globin, minor (152 aa).

One can recognise a Globin domain in the interval Val12 to Leu152. Residue His104 coordinates heme b.

Belongs to the globin family.

This is Globin, minor from Anadara trapezia (Sydney cockle).